We begin with the raw amino-acid sequence, 117 residues long: Large ribosomal subunit protein bL20 (117 aa).

It belongs to the bacterial ribosomal protein bL20 family.

Its function is as follows. Binds directly to 23S ribosomal RNA and is necessary for the in vitro assembly process of the 50S ribosomal subunit. It is not involved in the protein synthesizing functions of that subunit. This chain is Large ribosomal subunit protein bL20, found in Campylobacter jejuni subsp. jejuni serotype O:6 (strain 81116 / NCTC 11828).